Consider the following 1444-residue polypeptide: Bromodomain-containing protein 4 (1444 aa).

Disordered stretches follow at residues 1–44 (MGDG…PKRQ), 154–217 (VEIS…PQPI), 279–362 (AAPP…KQQE), 492–523 (PVMA…ERAQ), 540–645 (AALS…GGAA), 722–986 (CLRK…SSQP), and 1020–1422 (TSLM…RREA). Residues 11-27 (SGSSSSQGQPSSQAPSS) are compositionally biased toward low complexity. Positions 43-149 (RQTNQLQYLL…KVFLTKISEM (107 aa)) constitute a Bromo 1 domain. The span at 186–196 (ASPQTRGLSNL) shows a compositional bias: polar residues. Residues 206–216 (PQGPPTLPPQP) show a composition bias toward pro residues. The segment covering 303–319 (TTTPTANDQLNESSPAE) has biased composition (polar residues). Residues 327-347 (PRRDNTRPSKLPKKEAPDSQH) are compositionally biased toward basic and acidic residues. The Bromo 2 domain maps to 358–467 (PKQQEQLRYC…DVFEMRFAKM (110 aa)). A compositionally biased stretch (low complexity) spans 498 to 511 (SSSDTSSDSSSESE). An NPS region region spans residues 498–517 (SSSDTSSDSSSESESSTDDS). The segment at 538-610 (QLAALSQPQA…SKKLSKKEGG (73 aa)) is BID region. Residues 549-569 (KPKKKEKEKKEKKKDKHKKKA) are compositionally biased toward basic residues. One can recognise an NET domain in the interval 633 to 730 (DTEEDLGLTG…SCLRKKKKPA (98 aa)). Low complexity-rich tracts occupy residues 746 to 760 (GTSS…SSSS), 800 to 823 (LQPQ…HPSP), 919 to 954 (LQQS…QQQH), and 1036 to 1046 (PSLLQSVQVQS). The span at 1090–1109 (PLQTAQTQPGQHKVSMPSTK) shows a compositional bias: polar residues. The span at 1110–1121 (AQQIIQQQQATQ) shows a compositional bias: low complexity. The C-terminal (CTD) region stretch occupies residues 1126 to 1444 (RQHKADSYNS…LMAIFEENLF (319 aa)). The segment covering 1151-1163 (QIPQYSLVHQSPS) has biased composition (polar residues). The span at 1246–1255 (QDKEKFKQEP) shows a compositional bias: basic and acidic residues. Low complexity predominate over residues 1282 to 1296 (SSTTPSSGLKSSSDS). Positions 1298–1357 (EQFRRAAREKEEREKALKAQVEQAEKDRLRKEQEKLRGRDEEDSIEPPRRPLEEPRRRQE) are enriched in basic and acidic residues. The span at 1367–1389 (QHQTQAQAQTLNPAQSPSASQPT) shows a compositional bias: low complexity. The segment covering 1405–1422 (QQREMARRREQERRRREA) has biased composition (basic and acidic residues).

Belongs to the BET family. In terms of tissue distribution, widely expressed.

The protein resides in the nucleus. It localises to the chromosome. Its function is as follows. Chromatin reader protein that recognizes and binds acetylated histones and plays a key role in transmission of epigenetic memory across cell divisions and transcription regulation. Remains associated with acetylated chromatin throughout the entire cell cycle and provides epigenetic memory for postmitotic G1 gene transcription by preserving acetylated chromatin status and maintaining high-order chromatin structure. During interphase, plays a key role in regulating the transcription of signal-inducible genes by associating with the P-TEFb complex and recruiting it to promoters. This chain is Bromodomain-containing protein 4 (brd4), found in Danio rerio (Zebrafish).